Consider the following 441-residue polypeptide: Serine carboxypeptidase-like 4 (441 aa).

A signal peptide spans 1–29 (MANNNVYSVLKSLLLLLHLVFLSKQHVDS). 3 cysteine pairs are disulfide-bonded: Cys-88–Cys-331, Cys-252–Cys-266, and Cys-290–Cys-297. A glycan (N-linked (GlcNAc...) asparagine) is linked at Asn-109. Ser-184 is an active-site residue. The N-linked (GlcNAc...) asparagine glycan is linked to Asn-350. Asp-366 is an active-site residue. N-linked (GlcNAc...) asparagine glycosylation occurs at Asn-382. Residue His-419 is part of the active site.

It belongs to the peptidase S10 family. In terms of tissue distribution, ubiquitous.

The protein resides in the secreted. Probable carboxypeptidase. In Arabidopsis thaliana (Mouse-ear cress), this protein is Serine carboxypeptidase-like 4 (SCPL4).